We begin with the raw amino-acid sequence, 455 residues long: Indoleacetamide hydrolase (455 aa).

Active-site charge relay system residues include Lys71 and Ser146. Ser170 acts as the Acyl-ester intermediate in catalysis.

The protein belongs to the amidase family.

It participates in plant hormone metabolism; auxin biosynthesis. Functionally, hydrolyzes indole-3-acetamide (IAM) into indole-3-acetic acid (IAA). In Pseudomonas savastanoi (Pseudomonas syringae pv. savastanoi), this protein is Indoleacetamide hydrolase (iaaH).